The primary structure comprises 533 residues: NEDD8-activating enzyme E1 regulatory subunit (533 aa).

The interval 330–343 (DMIADSDKFIKLQN) is interaction with uba3.

The protein belongs to the ubiquitin-activating E1 family. ULA1 subfamily. As to quaternary structure, heterodimer of uba3 and nae1. The complex binds nedd8 and ube2m.

The protein operates within protein modification; protein neddylation. Functionally, regulatory subunit of the dimeric uba3-nae1 E1 enzyme. E1 activates nedd8 by first adenylating its C-terminal glycine residue with ATP, thereafter linking this residue to the side chain of the catalytic cysteine, yielding a nedd8-uba3 thioester and free AMP. E1 finally transfers nedd8 to the catalytic cysteine of ube2m. The covalent attachment of nedd8 to target proteins is known as 'neddylation' and the process is involved in the regulation of cell growth, viability and development. The protein is NEDD8-activating enzyme E1 regulatory subunit (nae1) of Xenopus laevis (African clawed frog).